Here is a 361-residue protein sequence, read N- to C-terminus: Phospho-N-acetylmuramoyl-pentapeptide-transferase (361 aa).

Helical transmembrane passes span 27–47 (ILAS…MIRW), 70–90 (GTPT…CLLW), 97–117 (SLWL…VDDY), 134–154 (YFWQ…NASL), 167–187 (TVTW…IVGS), 199–219 (GLAI…AYAS), 236–256 (TGEL…FLWY), 263–283 (VFMG…VAIV), 288–308 (LVLL…ILQV), and 338–358 (KVIV…LATL).

Belongs to the glycosyltransferase 4 family. MraY subfamily. Requires Mg(2+) as cofactor.

Its subcellular location is the cell inner membrane. It carries out the reaction UDP-N-acetyl-alpha-D-muramoyl-L-alanyl-gamma-D-glutamyl-meso-2,6-diaminopimeloyl-D-alanyl-D-alanine + di-trans,octa-cis-undecaprenyl phosphate = di-trans,octa-cis-undecaprenyl diphospho-N-acetyl-alpha-D-muramoyl-L-alanyl-D-glutamyl-meso-2,6-diaminopimeloyl-D-alanyl-D-alanine + UMP. It participates in cell wall biogenesis; peptidoglycan biosynthesis. Catalyzes the initial step of the lipid cycle reactions in the biosynthesis of the cell wall peptidoglycan: transfers peptidoglycan precursor phospho-MurNAc-pentapeptide from UDP-MurNAc-pentapeptide onto the lipid carrier undecaprenyl phosphate, yielding undecaprenyl-pyrophosphoryl-MurNAc-pentapeptide, known as lipid I. This chain is Phospho-N-acetylmuramoyl-pentapeptide-transferase, found in Legionella pneumophila (strain Paris).